Consider the following 259-residue polypeptide: Acyl-[acyl-carrier-protein]--UDP-N-acetylglucosamine O-acyltransferase (259 aa).

Belongs to the transferase hexapeptide repeat family. LpxA subfamily. In terms of assembly, homotrimer.

It localises to the cytoplasm. The catalysed reaction is a (3R)-hydroxyacyl-[ACP] + UDP-N-acetyl-alpha-D-glucosamine = a UDP-3-O-[(3R)-3-hydroxyacyl]-N-acetyl-alpha-D-glucosamine + holo-[ACP]. It functions in the pathway glycolipid biosynthesis; lipid IV(A) biosynthesis; lipid IV(A) from (3R)-3-hydroxytetradecanoyl-[acyl-carrier-protein] and UDP-N-acetyl-alpha-D-glucosamine: step 1/6. Its function is as follows. Involved in the biosynthesis of lipid A, a phosphorylated glycolipid that anchors the lipopolysaccharide to the outer membrane of the cell. The chain is Acyl-[acyl-carrier-protein]--UDP-N-acetylglucosamine O-acyltransferase from Akkermansia muciniphila (strain ATCC BAA-835 / DSM 22959 / JCM 33894 / BCRC 81048 / CCUG 64013 / CIP 107961 / Muc).